A 239-amino-acid chain; its full sequence is Uridylate kinase (239 aa).

Lys13–Gly16 is an ATP binding site. Position 55 (Gly55) interacts with UMP. Residues Gly56 and Arg60 each contribute to the ATP site. UMP contacts are provided by residues Asp75 and Thr136–Thr143. ATP is bound by residues Thr163, Tyr169, and Asp172.

This sequence belongs to the UMP kinase family. In terms of assembly, homohexamer.

The protein localises to the cytoplasm. It carries out the reaction UMP + ATP = UDP + ADP. It functions in the pathway pyrimidine metabolism; CTP biosynthesis via de novo pathway; UDP from UMP (UMPK route): step 1/1. Its activity is regulated as follows. Inhibited by UTP. Its function is as follows. Catalyzes the reversible phosphorylation of UMP to UDP. This Chromobacterium violaceum (strain ATCC 12472 / DSM 30191 / JCM 1249 / CCUG 213 / NBRC 12614 / NCIMB 9131 / NCTC 9757 / MK) protein is Uridylate kinase.